A 31-amino-acid chain; its full sequence is MALTDTQVYVALVIALLPAVLAFRLSTELYK.

Residues 7–26 form a helical membrane-spanning segment; it reads QVYVALVIALLPAVLAFRLS.

The protein belongs to the PsaM family.

The protein localises to the cellular thylakoid membrane. In Thermosynechococcus vestitus (strain NIES-2133 / IAM M-273 / BP-1), this protein is Photosystem I reaction center subunit XII.